The sequence spans 86 residues: Small ribosomal subunit protein uS17 (86 aa).

Belongs to the universal ribosomal protein uS17 family. In terms of assembly, part of the 30S ribosomal subunit.

Functionally, one of the primary rRNA binding proteins, it binds specifically to the 5'-end of 16S ribosomal RNA. This Streptococcus thermophilus (strain CNRZ 1066) protein is Small ribosomal subunit protein uS17.